We begin with the raw amino-acid sequence, 76 residues long: VpAmp1.0 (76 aa).

The N-terminal stretch at M1–S22 is a signal peptide. An Isoleucine amide modification is found at I41. The propeptide occupies G42–H76.

Belongs to the non-disulfide-bridged peptide (NDBP) superfamily. Short antimicrobial peptide (group 4) family. In terms of tissue distribution, expressed by the venom gland.

The protein resides in the secreted. Its subcellular location is the target cell membrane. Functionally, antimicrobial peptide with potent activity against Gram-positive bacteria S.aureus (MIC=2.5 uM) and S.agalactiaea (MIC=2.5 uM), and Gram-negative bacteria E.coli (MIC=24 uM) and P.aeruginosa (MIC=2.5 uM), as well as against yeasts Candida albicans (MIC=6.25 uM) and C.glabrata (MIC&gt;50 uM). Also elicits high hemolysis on human erythrocytes (HC(50)=9.2 uM). The sequence is that of VpAmp1.0 from Mesomexovis punctatus (Scorpion).